Here is a 170-residue protein sequence, read N- to C-terminus: Cytochrome b6-f complex subunit 4 (170 aa).

The next 3 helical transmembrane spans lie at 36–56, 95–115, and 131–151; these read LLYI…GLAV, LLGV…PFLE, and TVFL…TLPI.

It belongs to the cytochrome b family. PetD subfamily. In terms of assembly, the 4 large subunits of the cytochrome b6-f complex are cytochrome b6, subunit IV (17 kDa polypeptide, petD), cytochrome f and the Rieske protein, while the 4 small subunits are petG, petL, petM and petN. The complex functions as a dimer.

It localises to the plastid. The protein localises to the chloroplast thylakoid membrane. Its function is as follows. Component of the cytochrome b6-f complex, which mediates electron transfer between photosystem II (PSII) and photosystem I (PSI), cyclic electron flow around PSI, and state transitions. This chain is Cytochrome b6-f complex subunit 4, found in Nymphaea alba (White water-lily).